A 417-amino-acid chain; its full sequence is Lipoyl synthase, mitochondrial (417 aa).

The transit peptide at 1–26 directs the protein to the mitochondrion; sequence MAVCARGLRCLGTPAVSLRLAASRSY. A disordered region spans residues 27–61; it reads ATTTPPDPAIPNTPGAAATSSPAKRPRTSFQDKLN. The span at 44-58 shows a compositional bias: polar residues; it reads ATSSPAKRPRTSFQD. The [4Fe-4S] cluster site is built by Cys134, Cys139, Cys145, Cys165, Cys169, Cys172, and Ser380. The region spanning 148-369 is the Radical SAM core domain; the sequence is GGSKSAATAT…KEKALEMGFL (222 aa). Positions 398–417 are disordered; the sequence is ESTGPGSASVQDVATGDLVR.

It belongs to the radical SAM superfamily. Lipoyl synthase family. The cofactor is [4Fe-4S] cluster.

The protein localises to the mitochondrion. It catalyses the reaction [[Fe-S] cluster scaffold protein carrying a second [4Fe-4S](2+) cluster] + N(6)-octanoyl-L-lysyl-[protein] + 2 oxidized [2Fe-2S]-[ferredoxin] + 2 S-adenosyl-L-methionine + 4 H(+) = [[Fe-S] cluster scaffold protein] + N(6)-[(R)-dihydrolipoyl]-L-lysyl-[protein] + 4 Fe(3+) + 2 hydrogen sulfide + 2 5'-deoxyadenosine + 2 L-methionine + 2 reduced [2Fe-2S]-[ferredoxin]. Its pathway is protein modification; protein lipoylation via endogenous pathway; protein N(6)-(lipoyl)lysine from octanoyl-[acyl-carrier-protein]: step 2/2. Functionally, catalyzes the radical-mediated insertion of two sulfur atoms into the C-6 and C-8 positions of the octanoyl moiety bound to the lipoyl domains of lipoate-dependent enzymes, thereby converting the octanoylated domains into lipoylated derivatives. This Uncinocarpus reesii (strain UAMH 1704) protein is Lipoyl synthase, mitochondrial.